The following is a 1412-amino-acid chain: Sister chromatid cohesion protein PDS5 homolog B (1412 aa).

One copy of the HEAT repeat lies at 383-419 (LLVNDHLLNFVRERTLDKRWRVRKEAMMGLAQIYKKY). The segment at 1137–1412 (PLSSAGKQSQ…RRRTSKRERR (276 aa)) is disordered. Composition is skewed to low complexity over residues 1139–1149 (SSAGKQSQSKS) and 1156–1167 (SNASSSSNPSSP). 4 stretches are compositionally biased toward basic and acidic residues: residues 1172–1184 (GRLD…HSEN), 1196–1212 (KKTD…LEKP), 1223–1241 (SEEK…DQKL), and 1263–1272 (QEEKRLKEDV). Positions 1322–1331 (VEEEEEEEER) are enriched in acidic residues. Residues 1350–1362 (RTQQSRAGRSKQA) show a composition bias toward polar residues. Residues 1386 to 1397 (VPQEEVMEEEEV) are compositionally biased toward acidic residues. Over residues 1402 to 1412 (VRRRTSKRERR) the composition is skewed to basic residues.

In terms of assembly, interacts with the cohesin complex.

Its subcellular location is the nucleus. In terms of biological role, plays a role in androgen-induced proliferative arrest. Required for maintenance of sister chromatid cohesion during mitosis. The chain is Sister chromatid cohesion protein PDS5 homolog B (PDS5B) from Gallus gallus (Chicken).